The following is a 418-amino-acid chain: AP-3 complex subunit mu-1 (418 aa).

One can recognise an MHD domain in the interval 176-417 (NNEAYFDVVE…ITKAGKFQVR (242 aa)).

Belongs to the adaptor complexes medium subunit family. In terms of assembly, adaptor protein complex 3 (AP-3) is a heterotetramer composed of two large adaptins (delta-type subunit AP3D1 and beta-type subunit AP3B1 or AP3B2), a medium adaptin (mu-type subunit AP3M1 or AP3M2) and a small adaptin (sigma-type subunit APS1 or AP3S2). Interacts with AGAP1. AP-3 associates with the BLOC-1 complex.

It is found in the golgi apparatus. The protein localises to the cytoplasmic vesicle membrane. Functionally, part of the AP-3 complex, an adaptor-related complex which is not clathrin-associated. The complex is associated with the Golgi region as well as more peripheral structures. It facilitates the budding of vesicles from the Golgi membrane and may be directly involved in trafficking to lysosomes. In concert with the BLOC-1 complex, AP-3 is required to target cargos into vesicles assembled at cell bodies for delivery into neurites and nerve terminals. This chain is AP-3 complex subunit mu-1 (Ap3m1), found in Rattus norvegicus (Rat).